The chain runs to 359 residues: Patr class I histocompatibility antigen, B-1 alpha chain (359 aa).

Positions 1 to 20 (APRTVLLLLSAALALTETWA) are cleaved as a signal peptide. The segment at 21–110 (GSHSMRYFYT…ALRYYNQSEA (90 aa)) is alpha-1. Over 21–305 (GSHSMRYFYT…PSSQSTIPIV (285 aa)) the chain is Extracellular. N106 carries an N-linked (GlcNAc...) asparagine glycan. The interval 111-202 (GSHTWQTMYG…ENGKETLQRA (92 aa)) is alpha-2. Cystine bridges form between C121/C184 and C223/C279. The interval 203–294 (DPPKTHVTHH…GLPKPLTLRW (92 aa)) is alpha-3. The Ig-like C1-type domain maps to 205-291 (PKTHVTHHPI…QHEGLPKPLT (87 aa)). Residues 295-305 (EPSSQSTIPIV) are connecting peptide. A helical transmembrane segment spans residues 306 to 329 (GIVAGLAVLVVTVAVVAVVAAVMC). Residues 330–359 (RRKSSGGKGGSYSQAASSDSAQGSDVSLTA) lie on the Cytoplasmic side of the membrane. The disordered stretch occupies residues 332–359 (KSSGGKGGSYSQAASSDSAQGSDVSLTA). Positions 340–359 (SYSQAASSDSAQGSDVSLTA) are enriched in low complexity. Phosphoserine is present on residues S353 and S356.

Belongs to the MHC class I family. Heterodimer of an alpha chain and a beta chain (beta-2-microglobulin).

It localises to the membrane. Involved in the presentation of foreign antigens to the immune system. In Pan troglodytes (Chimpanzee), this protein is Patr class I histocompatibility antigen, B-1 alpha chain.